Reading from the N-terminus, the 248-residue chain is MSETARTTIDQSEVDRFSAMAAEWWDPTGKFRPLHKFNPVRLAYIRDRVAEHFGRDPKSRQPLEGLRLLDIGCGGGLLCEPMARMGADVLGADASEKNIGIARTHAAGSGVRVDYRAVTAEALAEAGESFDVVLNMEVVEHVADVDFFMTTCAHMVRPGGMMFVATINRTLKAAALAIFAAENVLRWLPRGTHQYEKLVRPEEIENPLVASGLEIADRTGVFFNPLSNQWNLSKDMDVNYMIVAKRPI.

S-adenosyl-L-methionine contacts are provided by arginine 41, glycine 72, aspartate 93, and methionine 136.

Belongs to the methyltransferase superfamily. UbiG/COQ3 family.

It carries out the reaction a 3-demethylubiquinol + S-adenosyl-L-methionine = a ubiquinol + S-adenosyl-L-homocysteine + H(+). The catalysed reaction is a 3-(all-trans-polyprenyl)benzene-1,2-diol + S-adenosyl-L-methionine = a 2-methoxy-6-(all-trans-polyprenyl)phenol + S-adenosyl-L-homocysteine + H(+). Its pathway is cofactor biosynthesis; ubiquinone biosynthesis. Its function is as follows. O-methyltransferase that catalyzes the 2 O-methylation steps in the ubiquinone biosynthetic pathway. The polypeptide is Ubiquinone biosynthesis O-methyltransferase (Sinorhizobium medicae (strain WSM419) (Ensifer medicae)).